The primary structure comprises 223 residues: Retbindin (223 aa).

A signal peptide spans 1-30 (MANRGHTQPRALAWALGLTLVWILLGACGG). Intrachain disulfides connect cysteine 73-cysteine 143, cysteine 80-cysteine 120, cysteine 113-cysteine 157, and cysteine 126-cysteine 139.

This sequence belongs to the folate receptor family. Not N-glycosylated.

The protein resides in the secreted. It is found in the extracellular space. Its subcellular location is the extracellular matrix. The protein localises to the interphotoreceptor matrix. It localises to the cell membrane. Functionally, riboflavin-binding protein which might have a role in retinal flavin transport. The protein is Retbindin (RTBDN) of Canis lupus familiaris (Dog).